We begin with the raw amino-acid sequence, 217 residues long: Thiamine-phosphate synthase (217 aa).

Residues 45 to 49 and asparagine 81 contribute to the 4-amino-2-methyl-5-(diphosphooxymethyl)pyrimidine site; that span reads QFRQK. Aspartate 82 and aspartate 101 together coordinate Mg(2+). Serine 120 is a binding site for 4-amino-2-methyl-5-(diphosphooxymethyl)pyrimidine. Residue 147–149 participates in 2-[(2R,5Z)-2-carboxy-4-methylthiazol-5(2H)-ylidene]ethyl phosphate binding; that stretch reads TPS. Lysine 150 lines the 4-amino-2-methyl-5-(diphosphooxymethyl)pyrimidine pocket. 2-[(2R,5Z)-2-carboxy-4-methylthiazol-5(2H)-ylidene]ethyl phosphate is bound by residues glycine 179 and 197-198; that span reads IS.

Belongs to the thiamine-phosphate synthase family. Requires Mg(2+) as cofactor.

It carries out the reaction 2-[(2R,5Z)-2-carboxy-4-methylthiazol-5(2H)-ylidene]ethyl phosphate + 4-amino-2-methyl-5-(diphosphooxymethyl)pyrimidine + 2 H(+) = thiamine phosphate + CO2 + diphosphate. The catalysed reaction is 2-(2-carboxy-4-methylthiazol-5-yl)ethyl phosphate + 4-amino-2-methyl-5-(diphosphooxymethyl)pyrimidine + 2 H(+) = thiamine phosphate + CO2 + diphosphate. The enzyme catalyses 4-methyl-5-(2-phosphooxyethyl)-thiazole + 4-amino-2-methyl-5-(diphosphooxymethyl)pyrimidine + H(+) = thiamine phosphate + diphosphate. It functions in the pathway cofactor biosynthesis; thiamine diphosphate biosynthesis; thiamine phosphate from 4-amino-2-methyl-5-diphosphomethylpyrimidine and 4-methyl-5-(2-phosphoethyl)-thiazole: step 1/1. Functionally, condenses 4-methyl-5-(beta-hydroxyethyl)thiazole monophosphate (THZ-P) and 2-methyl-4-amino-5-hydroxymethyl pyrimidine pyrophosphate (HMP-PP) to form thiamine monophosphate (TMP). The sequence is that of Thiamine-phosphate synthase from Helicobacter pylori (strain J99 / ATCC 700824) (Campylobacter pylori J99).